A 367-amino-acid polypeptide reads, in one-letter code: Forkhead box protein I1-B (367 aa).

Disordered stretches follow at residues 1 to 21 and 213 to 274; these read MNPVQQPAQHRSPASLLHLPH and DNGN…PPTV. Residues 128–222 constitute a DNA-binding region (fork-head); that stretch reads RPPYSYSALI…DNGNFRRKRK (95 aa). A compositionally biased stretch (basic and acidic residues) spans 233–246; the sequence is AKRDEDHLNPKGKE. A compositionally biased stretch (polar residues) spans 252-274; that stretch reads TPSSSPEVLSPTGHSKSPSPPTV.

As to expression, initially localized to the animal hemisphere (the presumptive ectoderm) of early-mid blastula embryos. Becomes restricted to head placodes, excluding the otic placodes, by the tailbud stages.

The protein resides in the nucleus. In terms of biological role, transcription factor. Essential for ventral specification of the early cephalic (head) ectoderm during gastrulation, playing a role in the 'non-neural' versus 'neural' cell fate choice. Binds to DNA via the target sequence 5'-[AG]TAAA[CT]A-3', with 5'-ATAAACA-3' being the preferred binding site. The protein is Forkhead box protein I1-B (foxi1-b) of Xenopus laevis (African clawed frog).